A 224-amino-acid chain; its full sequence is ATP-dependent dethiobiotin synthetase BioD (224 aa).

An ATP-binding site is contributed by 12 to 17; it reads GVGKTF. Thr16 lines the Mg(2+) pocket. The active site involves Lys37. Position 41 (Thr41) interacts with substrate. Glu107 contributes to the Mg(2+) binding site. Residues 107 to 110, 167 to 168, 197 to 199, and Glu204 contribute to the ATP site; these read EGAG, GS, and PEG.

Belongs to the dethiobiotin synthetase family. As to quaternary structure, homodimer. The cofactor is Mg(2+).

It is found in the cytoplasm. It carries out the reaction (7R,8S)-7,8-diammoniononanoate + CO2 + ATP = (4R,5S)-dethiobiotin + ADP + phosphate + 3 H(+). It participates in cofactor biosynthesis; biotin biosynthesis; biotin from 7,8-diaminononanoate: step 1/2. Catalyzes a mechanistically unusual reaction, the ATP-dependent insertion of CO2 between the N7 and N8 nitrogen atoms of 7,8-diaminopelargonic acid (DAPA, also called 7,8-diammoniononanoate) to form a ureido ring. The sequence is that of ATP-dependent dethiobiotin synthetase BioD from Corynebacterium glutamicum (strain R).